A 733-amino-acid chain; its full sequence is MAQFTGRVVGDYLVGRQIGSGSFSVVWEARHRVDGTEVAIKEIAMDRLNKKLQESLMSEIFILRRINHPNIIRLIDMIKSPGKVHLVLEYCKGGDLSVYVQRHGIVPEATAKHFMQQLAAGLQVLRDNNIIHRDLKPQNLLLSTNENDADLKIADFGFARSLQPRGLAETLCGSPLYMAPEIMQLQKYDAKADLWSVGAILFQLVTGRTPFTGNSQIQLLQNIIRSTELHFPGDCRDLSLDCIDLCQKLLRRNPVERLTFEEFFNHPFLSDRQSYDFSRSRLGLRTMDGFLSSGSSPSRNMEESSQEDCLPFLLDDDSSGPEGSPSYLKKTSSMKSSSGIKVDTRIERKEVESSPLKHTELTSGYSSFNQKVENDRFRFETQINSDRRNRREPTGLTDSRSLIAPGRVDDSQDSMDQDFVLVSGPPVDMPSSSSSSSKPYNFPFKSQSPPVELFNRSISSTAPMPIIGATSNSIGQFGSLDSQYSAPSTSHGSLDLGDAFEQPSTHSLTRIRSLRKYAATIAELVYERIESDKHLEAFSIQLAILAIWKQALHICHTQAISGLEGSPSQDINKLRSSSLKHDTHSSNKVTDLSHDGSEEISSQIQRQFIQEIELAEELAKSIEPGNTKMPDAMETIFEAALDLGKLGGVKEVMGDTENAGNQYSKAVRLLVFLLVEAPMLILNPPLSLTNSVRYRLRTYIDFLSRRLKHLQSHRRSSAGQMQGSSLAMMNRQS.

The Protein kinase domain occupies 12-269; the sequence is YLVGRQIGSG…FEEFFNHPFL (258 aa). ATP is bound by residues 18 to 26 and K41; that span reads IGSGSFSVV. Residue D134 is the Proton acceptor of the active site. Disordered regions lie at residues 292–363 and 379–414; these read SSGS…ELTS and FETQINSDRRNRREPTGLTDSRSLIAPGRVDDSQDS. Polar residues predominate over residues 329–339; that stretch reads KKTSSMKSSSG. Basic and acidic residues-rich tracts occupy residues 342-360 and 379-393; these read VDTRIERKEVESSPLKHTE and FETQINSDRRNRREP. Positions 419 to 422 match the AIM (Atg8-family-interacting motif) motif; the sequence is FVLV. Disordered stretches follow at residues 565-596 and 713-733; these read GSPSQDINKLRSSSLKHDTHSSNKVTDLSHDG and HRRSSAGQMQGSSLAMMNRQS. Polar residues predominate over residues 566–577; sequence SPSQDINKLRSS. Basic and acidic residues predominate over residues 579–596; that stretch reads LKHDTHSSNKVTDLSHDG. The span at 717–733 shows a compositional bias: polar residues; sequence SAGQMQGSSLAMMNRQS.

This sequence belongs to the protein kinase superfamily. Ser/Thr protein kinase family.

It localises to the cytoplasmic vesicle. The protein localises to the autophagosome. In terms of biological role, serine/threonine protein kinase involved in autophagy. The ATG1-ATG13 protein kinase complex regulates downstream events required for autophagosome enclosure and/or vacuolar delivery. This is Serine/threonine-protein kinase ATG1c from Arabidopsis thaliana (Mouse-ear cress).